The chain runs to 313 residues: Ribosomal RNA small subunit methyltransferase H (313 aa).

Residues 35-37 (GGH), D55, F79, D100, and Q107 contribute to the S-adenosyl-L-methionine site.

It belongs to the methyltransferase superfamily. RsmH family.

The protein localises to the cytoplasm. It carries out the reaction cytidine(1402) in 16S rRNA + S-adenosyl-L-methionine = N(4)-methylcytidine(1402) in 16S rRNA + S-adenosyl-L-homocysteine + H(+). Functionally, specifically methylates the N4 position of cytidine in position 1402 (C1402) of 16S rRNA. In Burkholderia mallei (strain NCTC 10247), this protein is Ribosomal RNA small subunit methyltransferase H.